A 337-amino-acid polypeptide reads, in one-letter code: 5-formaminoimidazole-4-carboxamide-1-(beta)-D-ribofuranosyl 5'-monophosphate synthetase (337 aa).

2 residues coordinate 5-amino-1-(5-phospho-beta-D-ribosyl)imidazole-4-carboxamide: His-23 and Ser-87. The ATP-grasp domain occupies 121-328 (MRLLEYAGIP…IAHEIVNAVK (208 aa)). Residues 144-191 (PVIV…VPAY) and Glu-213 each bind ATP. Position 233 (Asn-233) interacts with 5-amino-1-(5-phospho-beta-D-ribosyl)imidazole-4-carboxamide. Mg(2+)-binding residues include Glu-272 and Glu-285.

It belongs to the phosphohexose mutase family. Mg(2+) is required as a cofactor. It depends on Mn(2+) as a cofactor.

It catalyses the reaction 5-amino-1-(5-phospho-beta-D-ribosyl)imidazole-4-carboxamide + formate + ATP = 5-formamido-1-(5-phospho-D-ribosyl)imidazole-4-carboxamide + ADP + phosphate. Its pathway is purine metabolism; IMP biosynthesis via de novo pathway; 5-formamido-1-(5-phospho-D-ribosyl)imidazole-4-carboxamide from 5-amino-1-(5-phospho-D-ribosyl)imidazole-4-carboxamide (formate route): step 1/1. Functionally, catalyzes the ATP- and formate-dependent formylation of 5-aminoimidazole-4-carboxamide-1-beta-d-ribofuranosyl 5'-monophosphate (AICAR) to 5-formaminoimidazole-4-carboxamide-1-beta-d-ribofuranosyl 5'-monophosphate (FAICAR) in the absence of folates. The chain is 5-formaminoimidazole-4-carboxamide-1-(beta)-D-ribofuranosyl 5'-monophosphate synthetase from Caldivirga maquilingensis (strain ATCC 700844 / DSM 13496 / JCM 10307 / IC-167).